A 188-amino-acid chain; its full sequence is Large ribosomal subunit protein bL32m (188 aa).

The Zn(2+) site is built by Cys110, Cys113, Cys123, and Cys126. The segment at 162–188 (GETPSEHDQGKRIIERERKRPSWFTQN) is disordered. Basic and acidic residues predominate over residues 165-181 (PSEHDQGKRIIERERKR).

The protein belongs to the bacterial ribosomal protein bL32 family. As to quaternary structure, component of the mitochondrial ribosome large subunit (39S) which comprises a 16S rRNA and about 50 distinct proteins. In terms of processing, MRPL32 precursor is processed by the m-AAA protease (composed of AFG3L2 and SPG7), which cleaves the N-terminal transit peptide. Cleavage by the m-AAA protease takes place prior to assembly into the large subunit, an essential step for mitochondrial ribosome (mitoribosome) assembly. Proper processing by the m-AAA protease is dependent on the zinc-binding region within the tightly folded C-terminal domain of MRPL32: zinc-dependent folding halts degradation initiated from the N-terminus and triggers the release of mature MRPL32.

The protein resides in the mitochondrion. In terms of biological role, component of the mitochondrial large ribosomal subunit (mt-LSU). The mitochondrial ribosome (mitoribosome) is a large ribonucleoprotein complex responsible for the synthesis of proteins inside mitochondria. This chain is Large ribosomal subunit protein bL32m (MRPL32), found in Bos taurus (Bovine).